Reading from the N-terminus, the 426-residue chain is Glucose-6-phosphate isomerase (426 aa).

Residue Glu-282 is the Proton donor of the active site. Active-site residues include His-303 and Lys-419.

This sequence belongs to the GPI family.

It is found in the cytoplasm. The catalysed reaction is alpha-D-glucose 6-phosphate = beta-D-fructose 6-phosphate. Its pathway is carbohydrate biosynthesis; gluconeogenesis. The protein operates within carbohydrate degradation; glycolysis; D-glyceraldehyde 3-phosphate and glycerone phosphate from D-glucose: step 2/4. Catalyzes the reversible isomerization of glucose-6-phosphate to fructose-6-phosphate. The sequence is that of Glucose-6-phosphate isomerase from Mycoplasmoides gallisepticum (strain R(low / passage 15 / clone 2)) (Mycoplasma gallisepticum).